Consider the following 253-residue polypeptide: MFMLRVSRRGLATATSVPRLKTFKIYRWNPDKPTEKPHLQEYKVDLEDCGPMVLDALLKIKNEQDATLTFRRSCREGICGSCAMNIGGANTLACLCKIDQDESKTTKIYPLPHMFIVKDLVPDLTGFYQQYKSIQPYLQRTDYPADGKEVLQSIDDRKKLDGLYECILCACCSTSCPSYWWNQEEYLGPAVLMQAYRWLIDSRDQATKARRTMLQNSMSLYRCHTIMNCTRTCPKGLNPGRSIAEIKKQLAFD.

One can recognise a 2Fe-2S ferredoxin-type domain in the interval 23–114 (FKIYRWNPDK…TTKIYPLPHM (92 aa)). [2Fe-2S] cluster-binding residues include Cys74, Cys79, Cys82, and Cys94. In terms of domain architecture, 4Fe-4S ferredoxin-type spans 156–186 (DRKKLDGLYECILCACCSTSCPSYWWNQEEY). Residues Cys166, Cys169, and Cys172 each coordinate [4Fe-4S] cluster. A [3Fe-4S] cluster-binding site is contributed by Cys176. Trp181 serves as a coordination point for a ubiquinone. [3Fe-4S] cluster contacts are provided by Cys223 and Cys229. A [4Fe-4S] cluster-binding site is contributed by Cys233.

This sequence belongs to the succinate dehydrogenase/fumarate reductase iron-sulfur protein family. In terms of assembly, component of complex II composed of four subunits: a flavoprotein (FP), an iron-sulfur protein (IP), and a cytochrome b composed of a large and a small subunit. [2Fe-2S] cluster serves as cofactor. The cofactor is [3Fe-4S] cluster. Requires [4Fe-4S] cluster as cofactor.

It localises to the mitochondrion inner membrane. The catalysed reaction is a quinone + succinate = fumarate + a quinol. It participates in carbohydrate metabolism; tricarboxylic acid cycle; fumarate from succinate (eukaryal route): step 1/1. Its function is as follows. Iron-sulfur protein (IP) subunit of succinate dehydrogenase (SDH) that is involved in complex II of the mitochondrial electron transport chain and is responsible for transferring electrons from succinate to ubiquinone (coenzyme Q). The polypeptide is Succinate dehydrogenase [ubiquinone] iron-sulfur subunit, mitochondrial (SDH2) (Candida glabrata (strain ATCC 2001 / BCRC 20586 / JCM 3761 / NBRC 0622 / NRRL Y-65 / CBS 138) (Yeast)).